Reading from the N-terminus, the 357-residue chain is Phospho-N-acetylmuramoyl-pentapeptide-transferase (357 aa).

Helical transmembrane passes span Ala-23 to Tyr-43, Thr-70 to Leu-90, Ser-91 to Ile-111, Leu-127 to Ile-147, Tyr-171 to Thr-191, Gly-196 to Ser-216, Leu-236 to Tyr-256, Val-260 to Leu-280, Leu-286 to Ile-306, and Leu-334 to Leu-354.

It belongs to the glycosyltransferase 4 family. MraY subfamily. The cofactor is Mg(2+).

The protein localises to the cell inner membrane. The catalysed reaction is UDP-N-acetyl-alpha-D-muramoyl-L-alanyl-gamma-D-glutamyl-meso-2,6-diaminopimeloyl-D-alanyl-D-alanine + di-trans,octa-cis-undecaprenyl phosphate = di-trans,octa-cis-undecaprenyl diphospho-N-acetyl-alpha-D-muramoyl-L-alanyl-D-glutamyl-meso-2,6-diaminopimeloyl-D-alanyl-D-alanine + UMP. Its pathway is cell wall biogenesis; peptidoglycan biosynthesis. Its function is as follows. Catalyzes the initial step of the lipid cycle reactions in the biosynthesis of the cell wall peptidoglycan: transfers peptidoglycan precursor phospho-MurNAc-pentapeptide from UDP-MurNAc-pentapeptide onto the lipid carrier undecaprenyl phosphate, yielding undecaprenyl-pyrophosphoryl-MurNAc-pentapeptide, known as lipid I. The sequence is that of Phospho-N-acetylmuramoyl-pentapeptide-transferase from Buchnera aphidicola subsp. Acyrthosiphon pisum (strain 5A).